A 370-amino-acid polypeptide reads, in one-letter code: Chorismate synthase (370 aa).

NADP(+) is bound at residue R48. FMN is bound by residues 125–127 (RSS), 241–242 (NA), G285, 300–304 (KPTSS), and R326.

It belongs to the chorismate synthase family. As to quaternary structure, homotetramer. Requires FMNH2 as cofactor.

The catalysed reaction is 5-O-(1-carboxyvinyl)-3-phosphoshikimate = chorismate + phosphate. Its pathway is metabolic intermediate biosynthesis; chorismate biosynthesis; chorismate from D-erythrose 4-phosphate and phosphoenolpyruvate: step 7/7. In terms of biological role, catalyzes the anti-1,4-elimination of the C-3 phosphate and the C-6 proR hydrogen from 5-enolpyruvylshikimate-3-phosphate (EPSP) to yield chorismate, which is the branch point compound that serves as the starting substrate for the three terminal pathways of aromatic amino acid biosynthesis. This reaction introduces a second double bond into the aromatic ring system. In Jannaschia sp. (strain CCS1), this protein is Chorismate synthase.